A 310-amino-acid polypeptide reads, in one-letter code: Tagatose-6-phosphate kinase (310 aa).

The protein belongs to the carbohydrate kinase PfkB family. LacC subfamily.

The catalysed reaction is D-tagatofuranose 6-phosphate + ATP = D-tagatofuranose 1,6-bisphosphate + ADP + H(+). Its pathway is carbohydrate metabolism; D-tagatose 6-phosphate degradation; D-glyceraldehyde 3-phosphate and glycerone phosphate from D-tagatose 6-phosphate: step 1/2. This Staphylococcus aureus (strain Mu3 / ATCC 700698) protein is Tagatose-6-phosphate kinase.